The following is a 416-amino-acid chain: Serine hydroxymethyltransferase (416 aa).

(6S)-5,6,7,8-tetrahydrofolate is bound by residues Leu-121 and 125–127 (GHL). Position 229 is an N6-(pyridoxal phosphate)lysine (Lys-229).

The protein belongs to the SHMT family. In terms of assembly, homodimer. The cofactor is pyridoxal 5'-phosphate.

Its subcellular location is the cytoplasm. It catalyses the reaction (6R)-5,10-methylene-5,6,7,8-tetrahydrofolate + glycine + H2O = (6S)-5,6,7,8-tetrahydrofolate + L-serine. Its pathway is one-carbon metabolism; tetrahydrofolate interconversion. It functions in the pathway amino-acid biosynthesis; glycine biosynthesis; glycine from L-serine: step 1/1. Catalyzes the reversible interconversion of serine and glycine with tetrahydrofolate (THF) serving as the one-carbon carrier. This reaction serves as the major source of one-carbon groups required for the biosynthesis of purines, thymidylate, methionine, and other important biomolecules. Also exhibits THF-independent aldolase activity toward beta-hydroxyamino acids, producing glycine and aldehydes, via a retro-aldol mechanism. This Neisseria meningitidis serogroup C (strain 053442) protein is Serine hydroxymethyltransferase.